The sequence spans 152 residues: Psoriasis susceptibility 1 candidate gene 1 protein (152 aa).

Residues 1–31 (MTCTDQKSHSQRALGTQTPALQGPQLLNTDP) show a composition bias toward polar residues. The interval 1-42 (MTCTDQKSHSQRALGTQTPALQGPQLLNTDPSSEETRPPHVN) is disordered.

Expressed in skin. Also found in heart, placenta, liver, skeletal muscle and pancreas.

The protein is Psoriasis susceptibility 1 candidate gene 1 protein (PSORS1C1) of Homo sapiens (Human).